The primary structure comprises 260 residues: Acetylglutamate kinase (260 aa).

Substrate-binding positions include 45 to 46, R67, and N159; that span reads GG.

The protein belongs to the acetylglutamate kinase family. ArgB subfamily.

It is found in the cytoplasm. It catalyses the reaction N-acetyl-L-glutamate + ATP = N-acetyl-L-glutamyl 5-phosphate + ADP. Its pathway is amino-acid biosynthesis; L-arginine biosynthesis; N(2)-acetyl-L-ornithine from L-glutamate: step 2/4. In terms of biological role, catalyzes the ATP-dependent phosphorylation of N-acetyl-L-glutamate. The polypeptide is Acetylglutamate kinase (Aliivibrio fischeri (strain ATCC 700601 / ES114) (Vibrio fischeri)).